The chain runs to 208 residues: Small ribosomal subunit protein uS4 (208 aa).

The S4 RNA-binding domain maps to 95-157 (RRIDNIVYRA…DSLKKLIRSN (63 aa)).

Belongs to the universal ribosomal protein uS4 family. As to quaternary structure, part of the 30S ribosomal subunit. Contacts protein S5. The interaction surface between S4 and S5 is involved in control of translational fidelity.

One of the primary rRNA binding proteins, it binds directly to 16S rRNA where it nucleates assembly of the body of the 30S subunit. Functionally, with S5 and S12 plays an important role in translational accuracy. The chain is Small ribosomal subunit protein uS4 from Borrelia garinii subsp. bavariensis (strain ATCC BAA-2496 / DSM 23469 / PBi) (Borreliella bavariensis).